Here is a 278-residue protein sequence, read N- to C-terminus: Sulfate transport system permease protein CysT (278 aa).

7 consecutive transmembrane segments (helical) span residues 22 to 42, 67 to 87, 102 to 122, 139 to 159, 188 to 208, 217 to 237, and 246 to 266; these read FTWV…FLKS, FGLS…IAWV, FIDL…ATVY, IAFT…PFVV, FWRV…AQGF, SVVI…VLIF, and AGAT…LFVI. The region spanning 63-266 is the ABC transmembrane type-1 domain; the sequence is YEVTFGLSLA…LFSLVILFVI (204 aa).

The protein belongs to the binding-protein-dependent transport system permease family. CysTW subfamily. As to quaternary structure, the complex is composed of two ATP-binding proteins (CysA), two transmembrane proteins (CysT and CysW) and a solute-binding protein (CysP).

It is found in the cell inner membrane. Part of the ABC transporter complex CysAWTP (TC 3.A.1.6.1) involved in sulfate/thiosulfate import. Probably responsible for the translocation of the substrate across the membrane. The sequence is that of Sulfate transport system permease protein CysT (cysT) from Synechococcus elongatus (strain ATCC 33912 / PCC 7942 / FACHB-805) (Anacystis nidulans R2).